Reading from the N-terminus, the 486-residue chain is Transmembrane protein 39A (486 aa).

Residue asparagine 31 is glycosylated (N-linked (GlcNAc...) asparagine). Helical transmembrane passes span 72–92 (SLFFEFLFFIYLLIVLFIQYI), 110–130 (TSLNFHLIDYYLAAFITVMLA), 155–175 (LILARLVLLTLCGWVLCWTLV), 182–202 (SVLNLLFLGYPFGVYVPLYCF), 285–305 (EVLFNSLFSAYYVAFLPLCFV), 317–337 (CEHLIMVWINAFVMLTTQLLP), 418–438 (VLNLLILIEGSVVFYQLYSLL), and 444–464 (NHTLSMALILFCNYYVLFKLL).

It belongs to the TMEM39 family. In terms of assembly, interacts with SACM1L, SEC23A and SEC24A.

The protein localises to the endoplasmic reticulum membrane. Its function is as follows. Regulates autophagy by controlling the spatial distribution and levels of the intracellular phosphatidylinositol 4-phosphate (PtdIns(4)P) pools. Modulates (PtdIns(4)P) levels by regulating the ER-to-Golgi trafficking of the phosphatidylinositide phosphatase SACM1L. This Mus musculus (Mouse) protein is Transmembrane protein 39A (Tmem39a).